A 327-amino-acid polypeptide reads, in one-letter code: Methionyl-tRNA formyltransferase (327 aa).

111–114 lines the (6S)-5,6,7,8-tetrahydrofolate pocket; that stretch reads SLLP.

This sequence belongs to the Fmt family.

The catalysed reaction is L-methionyl-tRNA(fMet) + (6R)-10-formyltetrahydrofolate = N-formyl-L-methionyl-tRNA(fMet) + (6S)-5,6,7,8-tetrahydrofolate + H(+). In terms of biological role, attaches a formyl group to the free amino group of methionyl-tRNA(fMet). The formyl group appears to play a dual role in the initiator identity of N-formylmethionyl-tRNA by promoting its recognition by IF2 and preventing the misappropriation of this tRNA by the elongation apparatus. This chain is Methionyl-tRNA formyltransferase, found in Synechococcus elongatus (strain ATCC 33912 / PCC 7942 / FACHB-805) (Anacystis nidulans R2).